A 75-amino-acid polypeptide reads, in one-letter code: Small ribosomal subunit protein bS18 (75 aa).

Belongs to the bacterial ribosomal protein bS18 family. In terms of assembly, part of the 30S ribosomal subunit. Forms a tight heterodimer with protein bS6.

Its function is as follows. Binds as a heterodimer with protein bS6 to the central domain of the 16S rRNA, where it helps stabilize the platform of the 30S subunit. The polypeptide is Small ribosomal subunit protein bS18 (Roseobacter denitrificans (strain ATCC 33942 / OCh 114) (Erythrobacter sp. (strain OCh 114))).